The following is a 138-amino-acid chain: Large-conductance mechanosensitive channel (138 aa).

Helical transmembrane passes span 19 to 39, 40 to 60, and 81 to 101; these read VGVI…GDII, MPII…IPLA, and GSFL…FMVI.

It belongs to the MscL family. Homopentamer.

The protein localises to the cell inner membrane. Channel that opens in response to stretch forces in the membrane lipid bilayer. May participate in the regulation of osmotic pressure changes within the cell. In Bradyrhizobium sp. (strain ORS 278), this protein is Large-conductance mechanosensitive channel.